The primary structure comprises 328 residues: Beta-ketoacyl-[acyl-carrier-protein] synthase III (328 aa).

Residues C114 and H253 contribute to the active site. Residues 254–258 (QANIR) form an ACP-binding region. N283 is a catalytic residue.

The protein belongs to the thiolase-like superfamily. FabH family. In terms of assembly, homodimer.

The protein resides in the cytoplasm. The catalysed reaction is malonyl-[ACP] + acetyl-CoA + H(+) = 3-oxobutanoyl-[ACP] + CO2 + CoA. It functions in the pathway lipid metabolism; fatty acid biosynthesis. Catalyzes the condensation reaction of fatty acid synthesis by the addition to an acyl acceptor of two carbons from malonyl-ACP. Catalyzes the first condensation reaction which initiates fatty acid synthesis and may therefore play a role in governing the total rate of fatty acid production. Possesses both acetoacetyl-ACP synthase and acetyl transacylase activities. Its substrate specificity determines the biosynthesis of branched-chain and/or straight-chain of fatty acids. The polypeptide is Beta-ketoacyl-[acyl-carrier-protein] synthase III (Clostridioides difficile (strain 630) (Peptoclostridium difficile)).